The chain runs to 284 residues: Bifunctional protein FolD 1 (284 aa).

NADP(+)-binding positions include 166-168 (GAS) and isoleucine 232.

It belongs to the tetrahydrofolate dehydrogenase/cyclohydrolase family. As to quaternary structure, homodimer.

The enzyme catalyses (6R)-5,10-methylene-5,6,7,8-tetrahydrofolate + NADP(+) = (6R)-5,10-methenyltetrahydrofolate + NADPH. It catalyses the reaction (6R)-5,10-methenyltetrahydrofolate + H2O = (6R)-10-formyltetrahydrofolate + H(+). The protein operates within one-carbon metabolism; tetrahydrofolate interconversion. Catalyzes the oxidation of 5,10-methylenetetrahydrofolate to 5,10-methenyltetrahydrofolate and then the hydrolysis of 5,10-methenyltetrahydrofolate to 10-formyltetrahydrofolate. This is Bifunctional protein FolD 1 from Ectopseudomonas mendocina (strain ymp) (Pseudomonas mendocina).